Reading from the N-terminus, the 141-residue chain is ATP synthase epsilon chain (141 aa).

It belongs to the ATPase epsilon chain family. In terms of assembly, F-type ATPases have 2 components, CF(1) - the catalytic core - and CF(0) - the membrane proton channel. CF(1) has five subunits: alpha(3), beta(3), gamma(1), delta(1), epsilon(1). CF(0) has three main subunits: a, b and c.

The protein resides in the cell membrane. Functionally, produces ATP from ADP in the presence of a proton gradient across the membrane. This is ATP synthase epsilon chain from Natranaerobius thermophilus (strain ATCC BAA-1301 / DSM 18059 / JW/NM-WN-LF).